We begin with the raw amino-acid sequence, 645 residues long: 1-phosphatidylinositol 4,5-bisphosphate phosphodiesterase zeta-1 (645 aa).

The 36-residue stretch at 42 to 77 folds into the EF-hand domain; it reads CHFAHVKRIFKENDRHNQGRITTEDFRTIYRCIVHR. The PI-PLC X-box domain occupies 162 to 306; it reads QDMNKPLNDY…LKFKILVKNK (145 aa). Active-site residues include His177 and His222. The PI-PLC Y-box domain occupies 385 to 501; sequence LSDLVIYTKA…GYVLKPDFLR (117 aa). Residues 501–625 form the C2 domain; that stretch reads RDTTLGFNPN…KGYRRVPLFS (125 aa).

Interacts via its C2 domain with PtdIns(3)P and, to a lesser extent, PtdIns(5)P in vitro. Requires Ca(2+) as cofactor.

The protein localises to the nucleus. Its subcellular location is the cytoplasm. It is found in the perinuclear region. It carries out the reaction a 1,2-diacyl-sn-glycero-3-phospho-(1D-myo-inositol-4,5-bisphosphate) + H2O = 1D-myo-inositol 1,4,5-trisphosphate + a 1,2-diacyl-sn-glycerol + H(+). The production of the second messenger molecules diacylglycerol (DAG) and inositol 1,4,5-trisphosphate (IP3) is mediated by activated phosphatidylinositol-specific phospholipase C enzymes. In vitro, hydrolyzes PtdIns(4,5)P2 in a Ca(2+)-dependent manner. Triggers intracellular Ca(2+) oscillations in oocytes solely during M phase and is involved in inducing oocyte activation and initiating embryonic development up to the blastocyst stage. Is therefore a strong candidate for the egg-activating soluble sperm factor that is transferred from the sperm into the egg cytoplasm following gamete membrane fusion. May exert an inhibitory effect on phospholipase-C-coupled processes that depend on calcium ions and protein kinase C, including CFTR trafficking and function. The chain is 1-phosphatidylinositol 4,5-bisphosphate phosphodiesterase zeta-1 from Rattus norvegicus (Rat).